Reading from the N-terminus, the 278-residue chain is Orotidine 5'-phosphate decarboxylase (278 aa).

The active-site Proton donor is the Lys95.

Belongs to the OMP decarboxylase family. Type 2 subfamily.

The catalysed reaction is orotidine 5'-phosphate + H(+) = UMP + CO2. Its pathway is pyrimidine metabolism; UMP biosynthesis via de novo pathway; UMP from orotate: step 2/2. The chain is Orotidine 5'-phosphate decarboxylase from Mycobacterium ulcerans (strain Agy99).